Consider the following 197-residue polypeptide: Putative methyltransferase Mtx subunit A (197 aa).

Belongs to the MtrA family. May be part of a complex composed of 3 subunits; MtxA, MtxH and MtxX.

This chain is Putative methyltransferase Mtx subunit A (mtxA), found in Methanosarcina barkeri (strain Fusaro / DSM 804).